A 399-amino-acid polypeptide reads, in one-letter code: S-adenosylmethionine synthase (399 aa).

H17 contributes to the ATP binding site. D19 lines the Mg(2+) pocket. E45 serves as a coordination point for K(+). Residues E58 and Q101 each contribute to the L-methionine site. A flexible loop region spans residues 101-111 (QSPDIAQGVDK). ATP contacts are provided by residues 176-178 (DGK), 243-244 (RF), D252, 258-259 (RK), and K279. D252 provides a ligand contact to L-methionine. L-methionine is bound at residue K283.

Belongs to the AdoMet synthase family. Homotetramer; dimer of dimers. Mg(2+) is required as a cofactor. The cofactor is K(+).

The protein resides in the cytoplasm. The enzyme catalyses L-methionine + ATP + H2O = S-adenosyl-L-methionine + phosphate + diphosphate. It participates in amino-acid biosynthesis; S-adenosyl-L-methionine biosynthesis; S-adenosyl-L-methionine from L-methionine: step 1/1. Functionally, catalyzes the formation of S-adenosylmethionine (AdoMet) from methionine and ATP. The overall synthetic reaction is composed of two sequential steps, AdoMet formation and the subsequent tripolyphosphate hydrolysis which occurs prior to release of AdoMet from the enzyme. In Staphylococcus epidermidis (strain ATCC 35984 / DSM 28319 / BCRC 17069 / CCUG 31568 / BM 3577 / RP62A), this protein is S-adenosylmethionine synthase.